The sequence spans 402 residues: MNHPAARLDARLAPRLAERRQAGLYRCAEALEDYDGATAVRSDGQRCTVFCGNDYLGLAADPRPARALAEHARRQGSGAGAAHLVTGHRPEHEALEAELAAFTGREAALLFSTGYMANLGVVTTLVRRGQAVAEDRLNHASLIDAVRLAGGRPRRYRHADPTHLAQRLDDRAQLVVTDGVFSMDGDVAPLPELAAAAEATGAALVVDDAHGLGVIGPEGGGSVPATGCAPERVPVLVGTLGKAFGTFGAFVAGSRTLIDALRQWARPYIYTTAPPPAQAAAALEAVRIARAEGWRREHLQALIARFRSGARQLGLPVPQPAGPRTPIQPVLVGPSATATAWSAELDRRGLRVAAIRPPTVPAGTARLRVSLTACHSEEDVDRLLEALAAAARQAPPTLEAPS.

R26 is a substrate binding site. Pyridoxal 5'-phosphate is bound at residue 114 to 115 (GY). Position 139 (H139) interacts with substrate. The pyridoxal 5'-phosphate site is built by S182, H210, and T239. K242 is modified (N6-(pyridoxal phosphate)lysine). A substrate-binding site is contributed by T359.

The protein belongs to the class-II pyridoxal-phosphate-dependent aminotransferase family. BioF subfamily. In terms of assembly, homodimer. Pyridoxal 5'-phosphate serves as cofactor.

The enzyme catalyses 6-carboxyhexanoyl-[ACP] + L-alanine + H(+) = (8S)-8-amino-7-oxononanoate + holo-[ACP] + CO2. Its pathway is cofactor biosynthesis; biotin biosynthesis. Its function is as follows. Catalyzes the decarboxylative condensation of pimeloyl-[acyl-carrier protein] and L-alanine to produce 8-amino-7-oxononanoate (AON), [acyl-carrier protein], and carbon dioxide. This chain is 8-amino-7-oxononanoate synthase, found in Halorhodospira halophila (strain DSM 244 / SL1) (Ectothiorhodospira halophila (strain DSM 244 / SL1)).